The primary structure comprises 287 residues: Nuclease S1 (287 aa).

An N-terminal signal peptide occupies residues 1–20 (MPRLLPISAATLALAQLTYG). A divalent metal cation is bound by residues tryptophan 21, histidine 26, aspartate 65, and histidine 80. Substrate is bound by residues 21–26 (WGNLGH), 65–71 (DTYKYTD), 80–83 (HFID), and 93–98 (GVDYDR). Intrachain disulfides connect cysteine 92/cysteine 236 and cysteine 100/cysteine 105. Residues asparagine 112 and asparagine 122 are each glycosylated (N-linked (GlcNAc...) asparagine). Histidine 135, aspartate 139, histidine 145, histidine 168, and aspartate 172 together coordinate a divalent metal cation. The substrate binding stretch occupies residues 135–183 (HIIGDIHQPLHDENLEAGGNGIDVTYDGETTNLHHIWDTNMPEEAAGGY). Asparagine 248 carries an N-linked (GlcNAc...) asparagine glycan.

This sequence belongs to the nuclease type I family. In terms of assembly, monomer. Requires Zn(2+) as cofactor.

It carries out the reaction Endonucleolytic cleavage to 5'-phosphomononucleotide and 5'-phosphooligonucleotide end-products.. Its activity is regulated as follows. Inhibited by inorganic phosphate (Pi). Functionally, hydrolyzes only single-stranded DNA and RNA without apparent specificity for bases. This is Nuclease S1 from Aspergillus oryzae (strain ATCC 42149 / RIB 40) (Yellow koji mold).